We begin with the raw amino-acid sequence, 576 residues long: uncharacterized protein (576 aa).

The first 28 residues, 1–28, serve as a signal peptide directing secretion; the sequence is MLRLNGLRVLLRTLAAIGALLTTASASA. S185 serves as the catalytic Acyl-ester intermediate. 2 disulfides stabilise this stretch: C252-C269 and C278-C286. Ca(2+) is bound by residues D253, D256, D260, and V262. Residues D414 and H464 each act as charge relay system in the active site. Residues C529 and C551 are joined by a disulfide bond.

This sequence belongs to the tannase family.

This is an uncharacterized protein from Xanthomonas campestris pv. campestris (strain ATCC 33913 / DSM 3586 / NCPPB 528 / LMG 568 / P 25).